Consider the following 656-residue polypeptide: F-box/LRR-repeat protein 10 (656 aa).

Positions 20-66 (ERSLDLLPAALLETIMTKLDVASLCSLASTCKTLKSCVTRVLTFTPN) constitute an F-box domain. 16 LRR repeats span residues 71-96 (NVSL…KLDC), 120-145 (CRDF…CLGS), 151-176 (GRSI…ALMF), 194-221 (SDRL…EISG), 243-268 (VDCI…DIRD), 277-301 (VSDL…SLIR), 310-335 (FRRV…CLGG), 336-361 (FCRV…SIYH), 362-387 (GPKL…SLRR), 388-412 (CHLL…DLRG), 413-437 (CRNL…LLDG), 439-463 (DISD…SVRG), 464-491 (CRNL…DLSN), 492-517 (LPNL…QLRE), 518-551 (CRLI…DLYD), and 552-578 (CGGI…GITG). Positions 632 to 656 (ILGDEGDVEMEDAEDESEEDASEED) are disordered.

The protein is F-box/LRR-repeat protein 10 (FBL10) of Arabidopsis thaliana (Mouse-ear cress).